Reading from the N-terminus, the 171-residue chain is S-ribosylhomocysteine lyase (171 aa).

The Fe cation site is built by His-54, His-58, and Cys-128.

This sequence belongs to the LuxS family. Homodimer. Requires Fe cation as cofactor.

The enzyme catalyses S-(5-deoxy-D-ribos-5-yl)-L-homocysteine = (S)-4,5-dihydroxypentane-2,3-dione + L-homocysteine. Its function is as follows. Involved in the synthesis of autoinducer 2 (AI-2) which is secreted by bacteria and is used to communicate both the cell density and the metabolic potential of the environment. The regulation of gene expression in response to changes in cell density is called quorum sensing. Catalyzes the transformation of S-ribosylhomocysteine (RHC) to homocysteine (HC) and 4,5-dihydroxy-2,3-pentadione (DPD). This is S-ribosylhomocysteine lyase from Cronobacter sakazakii (strain ATCC BAA-894) (Enterobacter sakazakii).